Here is a 393-residue protein sequence, read N- to C-terminus: S-adenosylmethionine synthase (393 aa).

A Mg(2+)-binding site is contributed by glutamate 9. Histidine 15 is an ATP binding site. Glutamate 43 is a K(+) binding site. L-methionine contacts are provided by glutamate 56 and glutamine 99. ATP-binding positions include 167 to 169 (DGK), 235 to 238 (SGRF), aspartate 246, 252 to 253 (RK), alanine 269, lysine 273, and lysine 277. L-methionine is bound at residue aspartate 246. Residue lysine 277 coordinates L-methionine.

The protein belongs to the AdoMet synthase family. In terms of assembly, homotetramer. The cofactor is Mn(2+). Requires Mg(2+) as cofactor. It depends on Co(2+) as a cofactor. K(+) is required as a cofactor.

It localises to the cytoplasm. It catalyses the reaction L-methionine + ATP + H2O = S-adenosyl-L-methionine + phosphate + diphosphate. Its pathway is amino-acid biosynthesis; S-adenosyl-L-methionine biosynthesis; S-adenosyl-L-methionine from L-methionine: step 1/1. Its function is as follows. Catalyzes the formation of S-adenosylmethionine from methionine and ATP. The reaction comprises two steps that are both catalyzed by the same enzyme: formation of S-adenosylmethionine (AdoMet) and triphosphate, and subsequent hydrolysis of the triphosphate. This is S-adenosylmethionine synthase (SAMS) from Litchi chinensis (Lychee).